We begin with the raw amino-acid sequence, 182 residues long: Ribosome maturation factor RimP (182 aa).

Belongs to the RimP family.

Its subcellular location is the cytoplasm. Its function is as follows. Required for maturation of 30S ribosomal subunits. The sequence is that of Ribosome maturation factor RimP from Chloroherpeton thalassium (strain ATCC 35110 / GB-78).